The sequence spans 338 residues: Microtubule-associated protein RP/EB family member 2 (338 aa).

The disordered stretch occupies residues 1–21 (MPGPTQALSPNGENNNDIIQD). The Calponin-homology (CH) domain maps to 57–159 (TMSRHDIIAW…FIQWFKKFFD (103 aa)). Disordered stretches follow at residues 171–241 (EARQ…KDLE) and 300–338 (SEEH…FHFV). Over residues 200–234 (SPTAGAAKSSPASKPGSTPSRPSSAKKAAPSSSAS) the composition is skewed to low complexity. In terms of domain architecture, EB1 C-terminal spans 236–306 (SDKDLETQVI…LYASEEHESH (71 aa)). Basic and acidic residues predominate over residues 300–327 (SEEHESHTEEHEGEEQVHEQPSSRRSTD). Residues 328 to 338 (SRSVSDNFHFV) show a composition bias toward low complexity.

It belongs to the MAPRE family.

It localises to the cytoplasm. It is found in the cytoskeleton. Its function is as follows. May be involved in microtubule polymerization, and spindle function by stabilizing microtubules and anchoring them at centrosomes. This Gallus gallus (Chicken) protein is Microtubule-associated protein RP/EB family member 2 (MAPRE2).